Here is a 571-residue protein sequence, read N- to C-terminus: uncharacterized protein (571 aa).

5 helical membrane passes run 10 to 29, 36 to 55, 65 to 87, 96 to 118, and 166 to 188; these read VRLHPELALFAAIVFGHFIG, VSLGTVVGTLIAGMILGLLF, WAFFDLFLFAVGYSAGPQFFASL, ALAVVVSCTGLAAAIAMVALFRF, and ATTYIFGEVGLILFVTVVAPRLL. The RCK C-terminal domain maps to 294–378; the sequence is TEVDDQELLS…IATAARNLGF (85 aa). Helical transmembrane passes span 388-406, 411-433, 446-465, 480-502, 509-531, and 546-568; these read LVYLAGGVVVGILFGLLQV, VPLGLGTSGGVLVVGLVAGWLYS, LRLLSDVGLIVFIAAIGLAA, LFAKLVGAGVVVTLAGPIAGLLL, LPPVALLPGIAGAQTTVATLNAL, and VPFAVSNVLITLWGPVIVACAVA.

Belongs to the AAE transporter (TC 2.A.81) family.

It is found in the cell membrane. This is an uncharacterized protein from Bordetella parapertussis (strain 12822 / ATCC BAA-587 / NCTC 13253).